The sequence spans 359 residues: Probable ribonucleotide transport ATP-binding protein mkl (359 aa).

The ABC transporter domain occupies 28–264 (IEVNGLTKSF…DEPVVRQFLN (237 aa)). Position 60–67 (60–67 (GPSGTGKS)) interacts with ATP.

Belongs to the ABC transporter superfamily.

In terms of biological role, not known, could be involved in the transport of ribonucleotides. This Mycobacterium bovis (strain ATCC BAA-935 / AF2122/97) protein is Probable ribonucleotide transport ATP-binding protein mkl (mkl).